The chain runs to 702 residues: Transposon Tn7 transposition protein TnsB (702 aa).

A DNA-binding domain 1 (DBD1) region spans residues 1–139 (MWQINEVVLF…GQTPNALIPD (139 aa)). The segment at residues 105–124 (VEHVVQEHKVTKATVYKLLR) is a DNA-binding region (H-T-H motif). The tract at residues 137–160 (IPDYKNSGAPGERRSATGTAKIGR) is disordered. Residues 140-172 (YKNSGAPGERRSATGTAKIGRAREYGKGEGTKV) form a linker 1 region. The DNA-binding domain 2 (DBD2) stretch occupies residues 173–233 (TPEIERLFRL…QFRYFYDREY (61 aa)). Residues 234–267 (PKAQRLKSRVKAGVYKKDVRPLSSTATSQALGPG) are linker 2. Positions 262–480 (QALGPGSRYE…IPVQLWQWGM (219 aa)) constitute an Integrase catalytic domain. Positions 268–582 (SRYEIDATIA…RSRQFKGLSF (315 aa)) are catalytic domain (CD). Positions 589–702 (QAQEKHNKAN…FQDPPEKDES (114 aa)) are C-terminal domain. The interval 623–702 (KLTPSTTEPK…FQDPPEKDES (80 aa)) is disordered.

Heteromer with TnsA.

Functionally, sequence-specific, DNA-binding protein required for Tn7 transposition. Recognizes sequences necessary for recombination at both left and right ends of Tn7 and, together with TnsA, forms the transposase. TnsB executes the 3'-DNA strand breakage and joining reactions. TnsB binding introduces DNA bending. There are 3 DNA-binding sites in the left and 4 in the right end of Tn7; as TnsB levels increase more TnsB is bound, suggesting high protein levels contribute to transposon immunity. Binding of TnsB to the transposon right end represses expression of the downstream transposition genes. TnsABC + TnsD promote high-frequency insertion of Tn7 into a specific target site known as att-Tn7 whereas TnsABC + TnsE promote low-frequency insertion into many different sites. The polypeptide is Transposon Tn7 transposition protein TnsB (Escherichia coli).